A 65-amino-acid chain; its full sequence is Large ribosomal subunit protein bL35 (65 aa).

Belongs to the bacterial ribosomal protein bL35 family.

The protein is Large ribosomal subunit protein bL35 of Prochlorococcus marinus (strain NATL1A).